The sequence spans 1303 residues: Alpha,alpha-trehalose-phosphate synthase [UDP-forming] 2 (1303 aa).

Disordered regions lie at residues 1–48 and 205–251; these read MTVV…NNTT and LQRR…FRGK. Positions 212-221 are enriched in low complexity; the sequence is SSRGGSLRGS.

In the N-terminal section; belongs to the glycosyltransferase 20 family. The protein in the C-terminal section; belongs to the gob-1 trehalose phosphatase family.

It catalyses the reaction D-glucose 6-phosphate + UDP-alpha-D-glucose = alpha,alpha-trehalose 6-phosphate + UDP + H(+). Its function is as follows. Catalyzes the production of trehalose from glucose-6-phosphate and UDP-alpha-D-glucose in a 2 step process. In Aphelenchoides avenae (Mycophagous nematode worm), this protein is Alpha,alpha-trehalose-phosphate synthase [UDP-forming] 2 (tps-2).